Consider the following 199-residue polypeptide: DnaJ homolog subfamily C member 5B (199 aa).

A Phosphoserine modification is found at serine 14. Residues 19–84 (ALYEILGLHK…SKRSIYDKYG (66 aa)) form the J domain.

As to quaternary structure, interacts with the chaperone complex consisting of HSC70 and SGTA. In terms of processing, palmitoylated. Palmitoylation is not required for membrane association. As to expression, testis specific.

It localises to the membrane. This Homo sapiens (Human) protein is DnaJ homolog subfamily C member 5B (DNAJC5B).